The following is a 151-amino-acid chain: Deoxyuridine 5'-triphosphate nucleotidohydrolase (151 aa).

Substrate-binding positions include 70–72, N83, 87–89, and M97; these read RSG and LID.

Belongs to the dUTPase family. Mg(2+) serves as cofactor.

The enzyme catalyses dUTP + H2O = dUMP + diphosphate + H(+). The protein operates within pyrimidine metabolism; dUMP biosynthesis; dUMP from dCTP (dUTP route): step 2/2. In terms of biological role, this enzyme is involved in nucleotide metabolism: it produces dUMP, the immediate precursor of thymidine nucleotides and it decreases the intracellular concentration of dUTP so that uracil cannot be incorporated into DNA. The polypeptide is Deoxyuridine 5'-triphosphate nucleotidohydrolase (Pseudomonas fluorescens (strain SBW25)).